The primary structure comprises 176 residues: Membrane glycoprotein UL144 (176 aa).

The first 20 residues, 1 to 20, serve as a signal peptide directing secretion; it reads MKPLVMLICFGVILLQLGVT. A TNFR-Cys repeat occupies 58-95; that stretch reads PCPNGTYVSGLYNCTDCTQCNVTQVMIRNCTSTNNTVC. Disulfide bonds link C59/C71, C74/C87, and C77/C95. Residues 134 to 154 traverse the membrane as a helical segment; that stretch reads LAWLSLFIFLVGIILLILYLI.

As to quaternary structure, interacts with host TRIM23; this interaction causes auto-ubiquitination of TRAF6, leading to NF-kappaB activation.

The protein resides in the membrane. In terms of biological role, activates NF-kappa-B in a tumor necrosis factor receptor (TNFR)-associated factor 6 (TRAF6)-dependent manner, causing the up-regulation of the chemokine CCL22. The protein is Membrane glycoprotein UL144 (UL144) of Human cytomegalovirus (strain Merlin) (HHV-5).